A 1156-amino-acid chain; its full sequence is MHRRSSGSPVEDDAEDSPLVSRSPTESTAHGPNNNAFETAEKSRSQIAKRGTSFDLRRDNGASTPRSRNSGLWRTPSSSSTSSTTAMATASTETKSSSASFLMPLASQRLPMGTSPESSRFRSSRLRSPWTCSILTALTTLVASVFLFFIVRSFSARQAGEDGCGIPVMSPTFLHMVGFDTEHTRFASKYNLYLYREEGVDFYNQENLGLNGAPVLFLPGNAGSYRQVRSLAAEASRHFHDVVRHDQERIKAGTRSLDFFMIDFNEDMAAFHGQTLLDQAEYVNEAIAYILSLYHDPKRSRRDPELPDPSSVILIGHSMGGIVARTALTMSNYQANSVNTIVTMSAPHAKPPVSFDSDIVHTYKQINDYWREAYSQTWANNNPLWHVTLISIAGGSRDTVVPSDYASISSLVPETHGFTVFTSSIPDVWIGVDHLSITWCDQFRKAIIKSLFDIIDVRRASQTKPRAERMRIFKKWYLTGLEPVAERTLSQKEPNTLLTLEDKSNSILPQGQRLILRELGHRSGPKVYLLPVPPQGVSGKKFTLLTDQRFDKTGEHGNLEVLFCSVFPLQNGKFATVFSMNMDFSGGNTGSTRLACKNAAEDGIHLPASTPASKYPFDRVQPFSYLQYELEDLSEHQFVAIVDKADSPTKGWVLAEFSDSSDAVIRVRGGLGGLLSAGLKMRLPANRPMLTEIKIPALHSSLLDYKLQIVRHNHDKRQELFAPLLRQSISDPHESKFFVNVDKVDVNLHGVAPFMPPPLREQATLGGVSFQLWTDPSCGSTVDVSLKVDIAGSLGELVMRYRTVFAAFPLLVVALVLRKQFQMYDETGYFITFAEGLDTALRSSFPILLLAMSLLASSLATSAQIPPSDEPFQWPVNATETPIDFTKNDLLLGSQDAFFWFLVPVFGLISVGVCVILNYIALILLSVLSFIYGCLRTRSGYIKRNEKGTPIFSAPTARRRMINTAILLVLVSTLIPYQFAYMVACIVQLATCVRAQWHAKETRSTAHYNFSNYAHSIFILMLWILPINILVLLVWAHNLVVHWFMPFSSHHNVLSIMPFILLVETMTSGAMIPRVTTRLKHVTSMILFAIAVYSAVYGVSYAYLLHHLANILAAWFVVIYFFSSGFSLRRLWLILEGDDATQGKSEPGGSHQKKKP.

The segment at 1–95 is disordered; that stretch reads MHRRSSGSPV…AMATASTETK (95 aa). 2 stretches are compositionally biased toward polar residues: residues 20-37 and 61-72; these read VSRSPTESTAHGPNNNAF and GASTPRSRNSGL. The span at 75–95 shows a compositional bias: low complexity; that stretch reads TPSSSSTSSTTAMATASTETK. Residues 131 to 151 traverse the membrane as a helical segment; it reads TCSILTALTTLVASVFLFFIV. Serine 318 is a catalytic residue. 2 helical membrane-spanning segments follow: residues 797-817 and 845-865; these read LVMRYRTVFAAFPLLVVALVL and FPILLLAMSLLASSLATSAQI. N-linked (GlcNAc...) asparagine glycosylation is present at asparagine 877. The next 2 helical transmembrane spans lie at 897-917 and 966-986; these read AFFWFLVPVFGLISVGVCVIL and ILLVLVSTLIPYQFAYMVACI. Asparagine 1009 carries N-linked (GlcNAc...) asparagine glycosylation. 4 helical membrane passes run 1016 to 1036, 1053 to 1073, 1081 to 1101, and 1102 to 1122; these read SIFILMLWILPINILVLLVWA, VLSIMPFILLVETMTSGAMIP, HVTSMILFAIAVYSAVYGVSY, and AYLLHHLANILAAWFVVIYFF.

It belongs to the GPI inositol-deacylase family.

The protein localises to the endoplasmic reticulum membrane. Its function is as follows. Involved in inositol deacylation of GPI-anchored proteins which plays important roles in the quality control and ER-associated degradation of GPI-anchored proteins. This Aspergillus fumigatus (strain ATCC MYA-4609 / CBS 101355 / FGSC A1100 / Af293) (Neosartorya fumigata) protein is GPI inositol-deacylase (bst1).